A 605-amino-acid chain; its full sequence is MSSEAPIALLSVYDKTGLLPFAKSLKELGFRLLGSGGTAKMIREAGMEIEDVSNITKAPEMLGGRVKTLHPAVHGGILSRDIPSDLADLATNKISPITLVVCNLYPFVLQTAKPDCTLAGAIEEIDIGGVTLLRAAAKNHGRVSIISSPSDYETIVAELRAKGEVSAETRRGLAIKAFEDTKSYDEAISDYFRKVYATPGVEEEMKAGAGVGYQRLGLRYGANPHQKPAQAFVEQGEMPIKVLSGSPGYINLLDALNSWALVKELAAGLDLPAAASFKHVSPAGAAVGLPLDERAAKVFGVEDLKELSPLACAYARARGADRMSSFGDFIALSHTVDTPTAKIISREVSDGVIAPGYEPEALEILSKKKGGKYCVLQMDPTYVPPEIETRQVYGISLQQKRNDCKIDESLFKNVVTANKDLPKSAVTDLVVATLALKYTQSNSVCYALNGTVIGLGAGQQSRIHCTRLAGDKADNWWLRHHPRVLELPFKKGTKRADKANAIDLFVTGQAFEAEGGERAQWESLFETVPEPLTKEEREKHMKELTGVACASDAFFPFPDNVHRAKRSGATYLAAPSGSIMDKECIKAADESNLVFCHTDLRLFHH.

Residues Met-1–Ser-147 form the MGS-like domain. Residues Ser-35 to Thr-38, Arg-65 to Thr-68, Cys-102 to Asn-103, and Asp-126 to Ile-127 each bind IMP. Residue Lys-138 is the Proton donor/acceptor; for FAICAR cyclization activity of the active site. 5-amino-1-(5-phospho-beta-D-ribosyl)imidazole-4-carboxamide contacts are provided by residues Arg-219–Tyr-220, His-279, Gly-327, Asp-350, Asn-442, and Arg-462. His-279 (proton acceptor; for AICAR formyltransferase activity) is an active-site residue. Ile-463 contacts (6R)-10-formyltetrahydrofolate. 5-amino-1-(5-phospho-beta-D-ribosyl)imidazole-4-carboxamide is bound at residue Phe-554. Position 559 (Asp-559) interacts with (6R)-10-formyltetrahydrofolate. A 5-amino-1-(5-phospho-beta-D-ribosyl)imidazole-4-carboxamide-binding site is contributed by Arg-601.

The protein belongs to the PurH family. In terms of assembly, homodimer.

The protein resides in the cytoplasm. The protein localises to the cytosol. It catalyses the reaction (6R)-10-formyltetrahydrofolate + 5-amino-1-(5-phospho-beta-D-ribosyl)imidazole-4-carboxamide = 5-formamido-1-(5-phospho-D-ribosyl)imidazole-4-carboxamide + (6S)-5,6,7,8-tetrahydrofolate. The catalysed reaction is IMP + H2O = 5-formamido-1-(5-phospho-D-ribosyl)imidazole-4-carboxamide. The protein operates within purine metabolism; IMP biosynthesis via de novo pathway; 5-formamido-1-(5-phospho-D-ribosyl)imidazole-4-carboxamide from 5-amino-1-(5-phospho-D-ribosyl)imidazole-4-carboxamide (10-formyl THF route): step 1/1. It functions in the pathway purine metabolism; IMP biosynthesis via de novo pathway; IMP from 5-formamido-1-(5-phospho-D-ribosyl)imidazole-4-carboxamide: step 1/1. Its function is as follows. Bifunctional enzyme that catalyzes the last two steps of purine biosynthesis. Acts as a transformylase that incorporates a formyl group to the AMP analog AICAR (5-amino-1-(5-phospho-beta-D-ribosyl)imidazole-4-carboxamide) to produce the intermediate formyl-AICAR (FAICAR). Also catalyzes the cyclization of FAICAR to IMP. This chain is Bifunctional purine biosynthesis protein ADE16, found in Cryptococcus neoformans var. grubii serotype A (strain H99 / ATCC 208821 / CBS 10515 / FGSC 9487) (Filobasidiella neoformans var. grubii).